Consider the following 230-residue polypeptide: N-(5'-phosphoribosyl)anthranilate isomerase (230 aa).

The protein belongs to the TrpF family.

It catalyses the reaction N-(5-phospho-beta-D-ribosyl)anthranilate = 1-(2-carboxyphenylamino)-1-deoxy-D-ribulose 5-phosphate. It functions in the pathway amino-acid biosynthesis; L-tryptophan biosynthesis; L-tryptophan from chorismate: step 3/5. In Thermosynechococcus vestitus (strain NIES-2133 / IAM M-273 / BP-1), this protein is N-(5'-phosphoribosyl)anthranilate isomerase.